A 541-amino-acid chain; its full sequence is Chaperonin GroEL (541 aa).

ATP contacts are provided by residues 29-32 (TLGP), 86-90 (DGTTT), glycine 413, 477-479 (DAL), and aspartate 493.

This sequence belongs to the chaperonin (HSP60) family. As to quaternary structure, forms a cylinder of 14 subunits composed of two heptameric rings stacked back-to-back. Interacts with the co-chaperonin GroES.

The protein resides in the cytoplasm. It carries out the reaction ATP + H2O + a folded polypeptide = ADP + phosphate + an unfolded polypeptide.. Its function is as follows. Together with its co-chaperonin GroES, plays an essential role in assisting protein folding. The GroEL-GroES system forms a nano-cage that allows encapsulation of the non-native substrate proteins and provides a physical environment optimized to promote and accelerate protein folding. The protein is Chaperonin GroEL of Clostridium beijerinckii (strain ATCC 51743 / NCIMB 8052) (Clostridium acetobutylicum).